The sequence spans 377 residues: Protein RecA (377 aa).

Position 65–72 (65–72 (GPESSGKT)) interacts with ATP. The segment at 329-377 (GDEEAAATKATETKTDAPKDKDKGKTKAKDKPADVTPGQIELAPDKSAK) is disordered. Residues 339 to 361 (TETKTDAPKDKDKGKTKAKDKPA) show a composition bias toward basic and acidic residues.

It belongs to the RecA family.

It is found in the cytoplasm. In terms of biological role, can catalyze the hydrolysis of ATP in the presence of single-stranded DNA, the ATP-dependent uptake of single-stranded DNA by duplex DNA, and the ATP-dependent hybridization of homologous single-stranded DNAs. It interacts with LexA causing its activation and leading to its autocatalytic cleavage. This chain is Protein RecA, found in Levilactobacillus brevis (strain ATCC 367 / BCRC 12310 / CIP 105137 / JCM 1170 / LMG 11437 / NCIMB 947 / NCTC 947) (Lactobacillus brevis).